The primary structure comprises 314 residues: Lipoyl synthase (314 aa).

C55, C60, C66, C81, C85, C88, and S292 together coordinate [4Fe-4S] cluster. In terms of domain architecture, Radical SAM core spans 67–281 (WEDREATFLI…SAYAEGLGFA (215 aa)).

Belongs to the radical SAM superfamily. Lipoyl synthase family. The cofactor is [4Fe-4S] cluster.

The protein resides in the cytoplasm. It catalyses the reaction [[Fe-S] cluster scaffold protein carrying a second [4Fe-4S](2+) cluster] + N(6)-octanoyl-L-lysyl-[protein] + 2 oxidized [2Fe-2S]-[ferredoxin] + 2 S-adenosyl-L-methionine + 4 H(+) = [[Fe-S] cluster scaffold protein] + N(6)-[(R)-dihydrolipoyl]-L-lysyl-[protein] + 4 Fe(3+) + 2 hydrogen sulfide + 2 5'-deoxyadenosine + 2 L-methionine + 2 reduced [2Fe-2S]-[ferredoxin]. It participates in protein modification; protein lipoylation via endogenous pathway; protein N(6)-(lipoyl)lysine from octanoyl-[acyl-carrier-protein]: step 2/2. Its function is as follows. Catalyzes the radical-mediated insertion of two sulfur atoms into the C-6 and C-8 positions of the octanoyl moiety bound to the lipoyl domains of lipoate-dependent enzymes, thereby converting the octanoylated domains into lipoylated derivatives. The protein is Lipoyl synthase of Mycolicibacterium smegmatis (strain ATCC 700084 / mc(2)155) (Mycobacterium smegmatis).